Here is a 315-residue protein sequence, read N- to C-terminus: Adenine deaminase (315 aa).

Zn(2+) contacts are provided by H14, H16, and H194. E197 acts as the Proton donor in catalysis. D275 is a Zn(2+) binding site. Residue D276 coordinates substrate.

It belongs to the metallo-dependent hydrolases superfamily. Adenosine and AMP deaminases family. Adenine deaminase type 2 subfamily. The cofactor is Zn(2+).

The catalysed reaction is adenine + H2O + H(+) = hypoxanthine + NH4(+). Catalyzes the hydrolytic deamination of adenine to hypoxanthine. Plays an important role in the purine salvage pathway and in nitrogen catabolism. This Ectopseudomonas mendocina (strain ymp) (Pseudomonas mendocina) protein is Adenine deaminase.